Consider the following 327-residue polypeptide: Phenylalanine--tRNA ligase alpha subunit (327 aa).

Glu-252 is a binding site for Mg(2+).

It belongs to the class-II aminoacyl-tRNA synthetase family. Phe-tRNA synthetase alpha subunit type 1 subfamily. Tetramer of two alpha and two beta subunits. Mg(2+) serves as cofactor.

Its subcellular location is the cytoplasm. The enzyme catalyses tRNA(Phe) + L-phenylalanine + ATP = L-phenylalanyl-tRNA(Phe) + AMP + diphosphate + H(+). This is Phenylalanine--tRNA ligase alpha subunit from Photobacterium profundum (strain SS9).